Here is a 130-residue protein sequence, read N- to C-terminus: Cystatin domain-containing protein 1 (130 aa).

Positions 1–23 are cleaved as a signal peptide; that stretch reads MSWKVPMLVGLVVLGTHIWTINK. The 80-residue stretch at 37 to 116 folds into the Cystatin domain; sequence ASVEFAVAQF…CVFQVDARPW (80 aa). Intrachain disulfides connect Cys84–Cys94 and Cys107–Cys127.

Belongs to the cystatin family.

Its subcellular location is the secreted. May play a specialized role in spermatogenesis. The protein is Cystatin domain-containing protein 1 of Rattus norvegicus (Rat).